Here is a 449-residue protein sequence, read N- to C-terminus: Cysteine--tRNA ligase (449 aa).

A Zn(2+)-binding site is contributed by C29. The 'HIGH' region signature appears at 31–41; the sequence is PTVYDHLHIGN. Positions 211, 236, and 240 each coordinate Zn(2+). The short motif at 269 to 273 is the 'KMSKS' region element; sequence KMSKS. K272 is a binding site for ATP.

The protein belongs to the class-I aminoacyl-tRNA synthetase family. In terms of assembly, monomer. The cofactor is Zn(2+).

The protein resides in the cytoplasm. The enzyme catalyses tRNA(Cys) + L-cysteine + ATP = L-cysteinyl-tRNA(Cys) + AMP + diphosphate. The protein is Cysteine--tRNA ligase of Methylocella silvestris (strain DSM 15510 / CIP 108128 / LMG 27833 / NCIMB 13906 / BL2).